Consider the following 88-residue polypeptide: U-scoloptoxin(XY)-Er1b (88 aa).

An N-terminal signal peptide occupies residues 1–24 (MASQVVLSFALVVVLAVFVGQVDS). The disordered stretch occupies residues 66–88 (RPELSPGALDDSSEEKDNEASLA). Positions 79-88 (EEKDNEASLA) are excised as a propeptide.

It belongs to the scoloptoxin-XY family. Contains 3 disulfide bonds. In terms of tissue distribution, expressed by the venom gland.

The protein localises to the secreted. The protein is U-scoloptoxin(XY)-Er1b of Ethmostigmus rubripes (Giant centipede).